The primary structure comprises 147 residues: Large ribosomal subunit protein uL13 (147 aa).

The interval 126–147 (AGPTHPHQAQQPVPYEIKQVAQ) is disordered.

This sequence belongs to the universal ribosomal protein uL13 family. In terms of assembly, part of the 50S ribosomal subunit.

Functionally, this protein is one of the early assembly proteins of the 50S ribosomal subunit, although it is not seen to bind rRNA by itself. It is important during the early stages of 50S assembly. This Parafrankia sp. (strain EAN1pec) protein is Large ribosomal subunit protein uL13.